The primary structure comprises 85 residues: uncharacterized protein (85 aa).

This is an uncharacterized protein from Acidithiobacillus ferrooxidans (Thiobacillus ferrooxidans).